The sequence spans 157 residues: Class I hydrophobin rodA (157 aa).

Positions 1–41 are cleaved as a signal peptide; sequence MKFSIAAAVVAFAASVAALPPAHDSQFAGNGVGNKGNSNVK. An N-linked (GlcNAc...) asparagine glycan is attached at asparagine 47. 4 disulfide bridges follow: cysteine 57–cysteine 131, cysteine 65–cysteine 125, cysteine 66–cysteine 106, and cysteine 132–cysteine 150.

Belongs to the fungal hydrophobin family. As to quaternary structure, self-assembles to form functional amyloid fibrils called rodlets. Self-assembly into fibrillar rodlets occurs spontaneously at hydrophobic:hydrophilic interfaces and the rodlets further associate laterally to form amphipathic monolayers.

Its subcellular location is the secreted. The protein localises to the spore wall. Its function is as follows. Aerial growth, conidiation, and dispersal of filamentous fungi in the environment rely upon a capability of their secreting small amphipathic proteins called hydrophobins (HPBs) with low sequence identity. Class I can self-assemble into an outermost layer of rodlet bundles on aerial cell surfaces, conferring cellular hydrophobicity that supports fungal growth, development and dispersal; whereas Class II form highly ordered films at water-air interfaces through intermolecular interactions but contribute nothing to the rodlet structure. RodA is a class I hydrophobin that contributes to surface hydrophobicity, which is important for processes such as association of hyphae in reproductive structures, dispersal of aerial spores and adhesion of pathogens to host structures. Important for the formation of hydrophobic rodlet layers of asexually-produced spores. Promotes also biofilm formation and may enhance lignocellulose utilization via promoting a compact substrate-enzyme-fungus structure. The protein is Class I hydrophobin rodA of Emericella nidulans (strain FGSC A4 / ATCC 38163 / CBS 112.46 / NRRL 194 / M139) (Aspergillus nidulans).